Here is a 524-residue protein sequence, read N- to C-terminus: GMP synthase [glutamine-hydrolyzing] (524 aa).

The Glutamine amidotransferase type-1 domain maps to 9–207; sequence RILILDFSSQ…VIHICQCIPN (199 aa). Cys86 functions as the Nucleophile in the catalytic mechanism. Active-site residues include His181 and Glu183. Residues 208–399 form the GMPS ATP-PPase domain; sequence WTTKHIIEDS…LGLPADLIYR (192 aa). 235 to 241 serves as a coordination point for ATP; the sequence is SGGVDSA.

As to quaternary structure, homodimer.

The enzyme catalyses XMP + L-glutamine + ATP + H2O = GMP + L-glutamate + AMP + diphosphate + 2 H(+). It participates in purine metabolism; GMP biosynthesis; GMP from XMP (L-Gln route): step 1/1. In terms of biological role, catalyzes the synthesis of GMP from XMP. The sequence is that of GMP synthase [glutamine-hydrolyzing] from Coxiella burnetii (strain Dugway 5J108-111).